A 400-amino-acid chain; its full sequence is Acetylornithine aminotransferase (400 aa).

Residues 113 to 114 (GA) and F139 contribute to the pyridoxal 5'-phosphate site. Residue R142 coordinates N(2)-acetyl-L-ornithine. Residue 224 to 227 (DEVQ) coordinates pyridoxal 5'-phosphate. Residue K253 is modified to N6-(pyridoxal phosphate)lysine. S281 provides a ligand contact to N(2)-acetyl-L-ornithine. T282 contributes to the pyridoxal 5'-phosphate binding site.

Belongs to the class-III pyridoxal-phosphate-dependent aminotransferase family. ArgD subfamily. Homodimer. It depends on pyridoxal 5'-phosphate as a cofactor.

It localises to the cytoplasm. The catalysed reaction is N(2)-acetyl-L-ornithine + 2-oxoglutarate = N-acetyl-L-glutamate 5-semialdehyde + L-glutamate. It functions in the pathway amino-acid biosynthesis; L-arginine biosynthesis; N(2)-acetyl-L-ornithine from L-glutamate: step 4/4. In Mycobacterium bovis (strain ATCC BAA-935 / AF2122/97), this protein is Acetylornithine aminotransferase.